Reading from the N-terminus, the 1698-residue chain is Cullin-7 (1698 aa).

Positions 315 to 357 (QASDRPRSSARSPGSIFQPQLADVSPGLPAAQAQPSFRRSRRF) are disordered. S339 is modified (phosphoserine). A CPH domain is found at 360–433 (RSEFASGNTY…HWHMLEILGF (74 aa)). Residues 601-611 (SEDAAKVEAKE) show a composition bias toward basic and acidic residues. The interval 601–623 (SEDAAKVEAKEPPSQSPNTPLQR) is disordered. The region spanning 814 to 993 (PINIPFFDVF…HTRLFYMVRA (180 aa)) is the DOC domain. The tract at residues 1345–1370 (GASGKEHKSEKEEEAGAAAVVDVAEG) is disordered. K1576 participates in a covalent cross-link: Glycyl lysine isopeptide (Lys-Gly) (interchain with G-Cter in NEDD8).

It belongs to the cullin family. As to quaternary structure, component of the 3M complex, composed of core components CUL7, CCDC8 and OBSL1. Component of the Cul7-RING(FBXW8) complex consisting of CUL7, RBX1, SKP1 and FBXW8. Within the Cul7-RING(FBXW8) complex interacts with FBXW8 and RBX1, but not with SKP1. Interacts with CUL1 (via the C-terminal domain); the interaction seems to be mediated by FBXW8; it is likely specific to FBXW8, but not other F-box proteins. Interacts (via the CPH domain) with p53/TP53; the interaction preferentially involves tetrameric and dimeric p53/TP53; this interaction recruits p53/TP53 for ubiquitination by neddylated CUL1-RBX1. The CUL7-CUL9 heterodimer seems to interact specifically with p53/TP53. Interacts with FBXW8; interaction is mutually exclusive of binding to CUL9 or p53/TP53. Interacts with CUL9; leading to inhibited CUL9 activity. Interacts with OBSL1. Interacts (as part of the 3M complex) with HDAC4 and HDAC5; it is negatively regulated by ANKRA2. (Microbial infection) Interacts with SV40 Large T antigen; this interaction seems to inhibit CUL7. Post-translationally, according to a report, may not be neddylated despite the conserved consensus site for neddylation at Lys-1576. Structural study of the Cul7-RING(FBXW8) reveals that both CUL7 and RBX1 are in orientations that are incompatible with neddylation. As to expression, highly expressed in fetal kidney and adult skeletal muscle. Also abundant in fetal brain, as well as in adult pancreas, kidney, placenta and heart. Detected in trophoblasts, lymphoblasts, osteoblasts, chondrocytes and skin fibroblasts.

It is found in the cytoplasm. It localises to the cytoskeleton. The protein resides in the microtubule organizing center. Its subcellular location is the centrosome. The protein localises to the perinuclear region. It is found in the golgi apparatus. It participates in protein modification; protein ubiquitination. Its function is as follows. Core component of the 3M and Cul7-RING(FBXW8) complexes, which mediate the ubiquitination and subsequent proteasomal degradation of target proteins. Core component of the 3M complex, a complex required to regulate microtubule dynamics and genome integrity. It is unclear how the 3M complex regulates microtubules, it could act by controlling the level of a microtubule stabilizer. The Cul7-RING(FBXW8) complex alone lacks ubiquitination activity and does not promote polyubiquitination and proteasomal degradation of p53/TP53. However it mediates recruitment of p53/TP53 for ubiquitination by neddylated CUL1-RBX1. Interaction with CUL9 is required to inhibit CUL9 activity and ubiquitination of BIRC5. The Cul7-RING(FBXW8) complex also mediates ubiquitination and consequent degradation of target proteins such as GORASP1, IRS1 and MAP4K1/HPK1. Ubiquitination of GORASP1 regulates Golgi morphogenesis and dendrite patterning in brain. Mediates ubiquitination and degradation of IRS1 in a mTOR-dependent manner: the Cul7-RING(FBXW8) complex recognizes and binds IRS1 previously phosphorylated by S6 kinase (RPS6KB1 or RPS6KB2). The Cul7-RING(FBXW8) complex also mediates ubiquitination of MAP4K1/HPK1: recognizes and binds autophosphorylated MAP4K1/HPK1, leading to its degradation, thereby affecting cell proliferation and differentiation. Acts as a regulator in trophoblast cell epithelial-mesenchymal transition and placental development. While the Cul7-RING(FBXW8) and the 3M complexes are associated and involved in common processes, CUL7 and the Cul7-RING(FBXW8) complex may have additional functions. Probably plays a role in the degradation of proteins involved in endothelial proliferation and/or differentiation. This chain is Cullin-7 (CUL7), found in Homo sapiens (Human).